Here is a 1121-residue protein sequence, read N- to C-terminus: Potassium channel subfamily U member 1 (1121 aa).

The Extracellular portion of the chain corresponds to 1-24 (MSQTLLDSLNQKELTETSCTIEIQ). Residues 25-45 (AAFILSSLATFFGGLIILFLF) form a helical membrane-spanning segment. Topologically, residues 46-101 (RIALKSSRSWKYVKGPRGLLELFSSRRIEANPLRKLYFHGVFRQRIEMLLSAQTVV) are cytoplasmic. Residues 102 to 122 (GQVLVILVFVLSIGSLVIYFI) traverse the membrane as a helical segment. The Extracellular portion of the chain corresponds to 123–137 (NSMDPVRRCSSYEDK). Residues 138–158 (IVHVDLSFNAFFSFYFGLRFW) form a helical membrane-spanning segment. Over 159–165 (AAEDKIK) the chain is Cytoplasmic. The chain crosses the membrane as a helical span at residues 166-186 (FWLEMNSIVDIFTIPPTFISY). The Extracellular portion of the chain corresponds to 187-188 (YL). A helical; Voltage-sensor membrane pass occupies residues 189–209 (KSNWLGLRFLRALRLLELPKI). At 210–226 (LQILQVIKTSNSVKLSK) the chain is on the cytoplasmic side. Residues 227 to 247 (LLSIVISTWFTAAGFLHLVEN) form a helical membrane-spanning segment. Over 248-259 (SGDPWLNGRNSQ) the chain is Extracellular. The pore-forming intramembrane region spans 260-282 (TMSYFESIYLVTATMSTVGFGDV). A Selectivity for potassium motif is present at residues 276 to 279 (TVGF). Over 283–290 (VAKTSLGR) the chain is Extracellular. Residues 291–311 (IFIVFFTLGSLILFANYIPEM) traverse the membrane as a helical segment. Topologically, residues 312-1121 (VELFSTRKKY…LDASDIVQEK (810 aa)) are cytoplasmic. RCK N-terminal domains lie at 331 to 473 (KKFI…DNIL) and 718 to 889 (QNHI…DGML). Disordered stretches follow at residues 836–858 (SPTP…KERK) and 1052–1076 (DSSP…GSNF).

The protein belongs to the potassium channel family. Calcium-activated (TC 1.A.1.3) subfamily. KCa5.1/KCNU1 sub-subfamily. As to quaternary structure, homotetramer; which constitutes the calcium-activated potassium channel. Interact with LRRC52; this interaction changes some channel gating properties, such as shifting gating to more negative potentials at a given pH. As to expression, testis-specific. Mainly expressed in spermatocytes. In terms of tissue distribution, expressed in testis, brain, eye and kidney.

Its subcellular location is the cell membrane. The protein resides in the cytoplasm. The catalysed reaction is K(+)(in) = K(+)(out). Regulated by changes in cytosolic pH; activated by alkalization. In contrast to human KCNU1 is not activated by Ca(2+) or Mg(2+). The auxiliary subunit LRRC52 shifts the activation of KCNU1 to more negative potentials at a given pH. In terms of biological role, testis-specific potassium channel activated by both intracellular pH and membrane voltage that mediates export of K(+). Represents the primary spermatozoan K(+) current. The channel underlies a pH-triggered membrane hyperpolarization during the process of sperm capacitation, as sperm encounter the alkaline environment near the ovum in the female reproductive tract, thereby playing an essential for male fertility. The protein is Potassium channel subfamily U member 1 (Kcnu1) of Mus musculus (Mouse).